Consider the following 254-residue polypeptide: Hydroxypyruvate/pyruvate aldolase (254 aa).

His47 serves as the catalytic Proton acceptor. Positions 151 and 177 each coordinate a divalent metal cation.

Belongs to the HpcH/HpaI aldolase family. It depends on a divalent metal cation as a cofactor.

It carries out the reaction D-glyceraldehyde + pyruvate = 2-dehydro-3-deoxy-L-galactonate. Its function is as follows. Aldolase which can catalyze in vitro the aldolisation reaction between hydroxypyruvate (HPA) or pyruvate (PA) and D-glyceraldehyde (D-GA). The condensation of pyruvate and D-glyceraldehyde produces 2-dehydro-3-deoxy-L-galactonate as the major product. Has weak activity with hydroxypyruvate and D-glyceraldehyde. The sequence is that of Hydroxypyruvate/pyruvate aldolase from Chromohalobacter salexigens (strain ATCC BAA-138 / DSM 3043 / CIP 106854 / NCIMB 13768 / 1H11).